We begin with the raw amino-acid sequence, 301 residues long: Probable aspartoacylase (301 aa).

Residues His13 and Glu16 each coordinate Zn(2+). Substrate contacts are provided by residues Arg54 and 61–62 (NR). Residue His105 participates in Zn(2+) binding. Glu163 and Tyr273 together coordinate substrate.

Belongs to the AspA/AstE family. Aspartoacylase subfamily. It depends on Zn(2+) as a cofactor.

It catalyses the reaction an N-acyl-L-aspartate + H2O = a carboxylate + L-aspartate. This chain is Probable aspartoacylase, found in Prochlorococcus marinus (strain MIT 9215).